Reading from the N-terminus, the 837-residue chain is Tuftelin-interacting protein 11 (837 aa).

2 stretches are compositionally biased toward basic and acidic residues: residues 1 to 13 and 53 to 64; these read MSLS…GEGR and VWAERDSDDERP. 3 disordered regions span residues 1 to 21, 53 to 72, and 85 to 133; these read MSLS…DDER, VWAE…KRAR, and LKKG…KGFA. The segment at 1–50 is required for interaction with DHX15; it reads MSLSHLYRDGEGRIDDDDDERENFEITDWDLQNEFNPNRQRHWQTKEEAT. Phosphoserine is present on residues Ser2, Ser59, and Ser98. A compositionally biased stretch (acidic residues) spans 91–102; it reads EEAELEDSDDEE. A compositionally biased stretch (basic and acidic residues) spans 103-116; that stretch reads KPVKQDDFPKDFGP. Ser144 bears the Phosphoserine mark. A G-patch domain is found at 149-195; sequence TKGIGQKLLQKMGYVPGRGLGKNAQGIINPIEAKQRKGKGAVGAYGS. A disordered region spans residues 179–236; the sequence is IEAKQRKGKGAVGAYGSERTTQSMQDFPVVDSEEEAEEEFQKELSQWRKDPSGSKKKP. Residue Ser210 is modified to Phosphoserine. The span at 217–231 shows a compositional bias: basic and acidic residues; the sequence is EFQKELSQWRKDPSG. The Nuclear localization signal signature appears at 700–705; that stretch reads VKDKFN. A required for nuclear speckle localization region spans residues 710 to 734; the sequence is IMNRAVSSNVGAYMQPGARENIAYL.

The protein belongs to the TFP11/STIP family. As to quaternary structure, identified in the spliceosome C complex. Found in the Intron Large (IL) complex, a post-mRNA release spliceosomal complex containing the excised intron, U2, U5 and U6 snRNPs, and splicing factors. Interacts with TUFT1. Interacts with DHX15; indicative for a recruitment of DHX15 to the IL complex. Interacts with GCFC2.

It is found in the cytoplasm. The protein resides in the nucleus. Involved in pre-mRNA splicing, specifically in spliceosome disassembly during late-stage splicing events. Intron turnover seems to proceed through reactions in two lariat-intron associated complexes termed Intron Large (IL) and Intron Small (IS). In cooperation with DHX15 seems to mediate the transition of the U2, U5 and U6 snRNP-containing IL complex to the snRNP-free IS complex leading to efficient debranching and turnover of excised introns. May play a role in the differentiation of ameloblasts and odontoblasts or in the forming of the enamel extracellular matrix. The protein is Tuftelin-interacting protein 11 (TFIP11) of Pan troglodytes (Chimpanzee).